A 92-amino-acid polypeptide reads, in one-letter code: Small ribosomal subunit protein uS19 (92 aa).

Belongs to the universal ribosomal protein uS19 family.

Protein S19 forms a complex with S13 that binds strongly to the 16S ribosomal RNA. The protein is Small ribosomal subunit protein uS19 of Buchnera aphidicola subsp. Acyrthosiphon pisum (strain 5A).